A 201-amino-acid polypeptide reads, in one-letter code: Recombination protein RecR (201 aa).

Residues 57–72 (CADCRTFTEQDVCNIC) form a C4-type zinc finger. A Toprim domain is found at 81-176 (GQICVVESPA…EASRIAHGVP (96 aa)).

The protein belongs to the RecR family.

Functionally, may play a role in DNA repair. It seems to be involved in an RecBC-independent recombinational process of DNA repair. It may act with RecF and RecO. This chain is Recombination protein RecR, found in Citrobacter koseri (strain ATCC BAA-895 / CDC 4225-83 / SGSC4696).